Reading from the N-terminus, the 406-residue chain is Argininosuccinate synthase (406 aa).

Residues Ala-11–Ser-19 and Ala-38 each bind ATP. Positions 91 and 96 each coordinate L-citrulline. Gly-121 lines the ATP pocket. 3 residues coordinate L-aspartate: Thr-123, Asn-127, and Asp-128. Asn-127 is an L-citrulline binding site. 5 residues coordinate L-citrulline: Arg-131, Ser-182, Ser-191, Glu-267, and Tyr-279.

It belongs to the argininosuccinate synthase family. Type 1 subfamily. In terms of assembly, homotetramer.

Its subcellular location is the cytoplasm. The catalysed reaction is L-citrulline + L-aspartate + ATP = 2-(N(omega)-L-arginino)succinate + AMP + diphosphate + H(+). It functions in the pathway amino-acid biosynthesis; L-arginine biosynthesis; L-arginine from L-ornithine and carbamoyl phosphate: step 2/3. This is Argininosuccinate synthase from Rhodospirillum centenum (strain ATCC 51521 / SW).